A 291-amino-acid polypeptide reads, in one-letter code: F-box/kelch-repeat protein At5g38670 (291 aa).

One can recognise an F-box domain in the interval 5 to 51 (TNPNPSLPDDLILSCVARVSRLYYPALSLVSKSFRSLIASPELYKTR). Kelch repeat units follow at residues 46 to 91 (ELYK…VLDE), 92 to 140 (KIYV…RFDG), 142 to 187 (LHLV…WYTI), and 189 to 232 (KGDI…YGGK).

The sequence is that of F-box/kelch-repeat protein At5g38670 from Arabidopsis thaliana (Mouse-ear cress).